A 249-amino-acid polypeptide reads, in one-letter code: Probable transcriptional regulatory protein ERGA_CDS_03720 (249 aa).

The disordered stretch occupies residues methionine 1 to arginine 21.

It belongs to the TACO1 family.

The protein resides in the cytoplasm. This chain is Probable transcriptional regulatory protein ERGA_CDS_03720, found in Ehrlichia ruminantium (strain Gardel).